The primary structure comprises 696 residues: Glycosyltransferase GlyA (696 aa).

Residues 1–301 (MLVDDKITVI…NQLSRQEESE (301 aa)) are GT2 domain. Residues 302 to 556 (KKAIVLAANY…TELGQNHHLH (255 aa)) form a GT8 domain region. UDP contacts are provided by residues 308 to 313 (AANYGY) and 399 to 400 (DC). Mn(2+) is bound by residues Asp-399, Asp-401, and His-518. 518–524 (HYLSHRK) is a binding site for UDP.

The protein in the N-terminal section; belongs to the glycosyltransferase 2 family. It in the central section; belongs to the glycosyltransferase 8 family.

The protein operates within protein modification; protein glycosylation. In terms of biological role, involved in the polymorphic O-glycosylation of the serine-rich repeat protein PsrP. Catalyzes the fourth step in glycosylation of PsrP in this bacteria. Can transfer the sugar from UDP-galactose to the terminal sugar moiety of PsrP-GlcNAc-Glc-Gal or of PsrP-GlcNAc-Glc-Glc (using truncated substrates with the PsrP SSR1 domain). Has hydrolytic activity against UDP-galactose and to a lesser extent against UDP-glucose. The polypeptide is Glycosyltransferase GlyA (Streptococcus pneumoniae serotype 4 (strain ATCC BAA-334 / TIGR4)).